The primary structure comprises 506 residues: Probable alpha-L-arabinofuranosidase B (506 aa).

The first 26 residues, 1 to 26 (MLSQPSRERAFVLALGLVVSSSLAAA), serve as a signal peptide directing secretion. A catalytic region spans residues 27–343 (APCDIYSSGG…ADIVAANYAV (317 aa)). 3 cysteine pairs are disulfide-bonded: Cys29-Cys39, Cys89-Cys94, and Cys184-Cys185. A substrate-binding site is contributed by Asp227. Residue Glu229 is the Nucleophile of the active site. Residue Asn230 participates in substrate binding. Asn285 carries N-linked (GlcNAc...) asparagine glycosylation. Substrate is bound at residue Gly304. The Proton donor role is filled by Asp305. The tract at residues 344 to 506 (TSLTSGPALT…VSWVISSGFA (163 aa)) is ABD. Cys409 and Cys447 are joined by a disulfide. Residues His424, Asn426, Phe427, Asp443, His471, Leu476, and Asp496 each coordinate substrate.

Belongs to the glycosyl hydrolase 54 family.

It is found in the secreted. It catalyses the reaction Hydrolysis of terminal non-reducing alpha-L-arabinofuranoside residues in alpha-L-arabinosides.. It participates in glycan metabolism; L-arabinan degradation. Functionally, alpha-L-arabinofuranosidase involved in the degradation of arabinoxylan, a major component of plant hemicellulose. Able to hydrolyze 1,5-, 1,3- and 1,2-alpha-linkages not only in L-arabinofuranosyl oligosaccharides, but also in polysaccharides containing terminal non-reducing L-arabinofuranoses in side chains, like L-arabinan, arabinogalactan and arabinoxylan. The polypeptide is Probable alpha-L-arabinofuranosidase B (abfB) (Aspergillus clavatus (strain ATCC 1007 / CBS 513.65 / DSM 816 / NCTC 3887 / NRRL 1 / QM 1276 / 107)).